A 213-amino-acid polypeptide reads, in one-letter code: Outer-membrane lipoprotein carrier protein (213 aa).

Positions 1-18 are cleaved as a signal peptide; the sequence is MKYFATICIAAYAGLAGA.

This sequence belongs to the LolA family. In terms of assembly, monomer.

The protein resides in the periplasm. In terms of biological role, participates in the translocation of lipoproteins from the inner membrane to the outer membrane. Only forms a complex with a lipoprotein if the residue after the N-terminal Cys is not an aspartate (The Asp acts as a targeting signal to indicate that the lipoprotein should stay in the inner membrane). This chain is Outer-membrane lipoprotein carrier protein, found in Albidiferax ferrireducens (strain ATCC BAA-621 / DSM 15236 / T118) (Rhodoferax ferrireducens).